Here is a 944-residue protein sequence, read N- to C-terminus: MERAMEQLNRLTRSLRRARTVELPEDNETAVYTLMPMVMADQHRSVLELLSNSKFDVNYAFGRVKRSLLHIAANCGSVECLVLLLKRGADPNYQDISGCTPLHLAARNGQKKCMSKLLEYNADVNICNNEGLTAIHWLAVNGRTELLHDLVQHVTNVDVEDAMGQTALHVACQNGHKTTVLCLLDSGADINRPNVSGATPLYFACSHGQRDTAQILLLRGAKYLPDKNGVTPLDLCVQGGYGETCDILIQHHPRLFQTLIQMTQNEELRENMLRQVLEHLSQQSEVQYLKILTGLAEVATTNGHKLLSISSSYEAQMKSLLRIVRIFCHVFRIGPSSPNNGNDMGYNGNKTPRNQVFKVRNVSDVFRKINIKEMNLPKHTLIYQATSEQDPLELLWHSLDEWLVLIATELTKNKRDSSNIACILLKQSPLDQQDISLAHQSAIGESGNHDHLLASTRAGDLESCSAIGIQEPVADGQDVISMTANRLSAVIQAFYMCCSCQMPQGMTSPRFIEFVCKHDEVLKCFVTRNPKIIFDHFHFLLECPELMSRFMHIIKAQPFKERCEWFYEHLLAGQPDTDMVHRPVNENDILLVHRDSIFRSSCEVVFKSNCEKLKQGIAVRFHGEEGMGQGVVREWFDILSSEMINPDYALFTQSADGTTFQPNSNSSVNPDHLNYFRFAGEILGLALYHRQLVNIYFTRSFYKHILGIPVNYQDVASIDPEYAKNLQWILDNDISDLGLELTFSVETDVFGAMEEVPLKPGGASILVTQENKAEYVQLVTELRMTRAIQPQINGFLQGFHMFIPPSLIQLFDEYELELLLSGMPEIDVNDWMKNTEYTSGYERDDQVIQWFWEVVQELTQEERVLLLQFVTGSSRVPHGGFAYIMGGSGLQNFTIAAVAYTANLLPTSSTCINMLKLPEYPSKEILKDRLLVALHCGSYGYTMA.

ANK repeat units follow at residues 23 to 55, 64 to 93, 97 to 126, 130 to 159, 163 to 192, 196 to 226, and 228 to 253; these read LPED…NSKF, VKRS…DPNY, SGCT…DVNI, EGLT…NVDV, MGQT…DINR, SGAT…YLPD, and NGVT…QHHP. One can recognise an HECT domain in the interval 609-944; that stretch reads NCEKLKQGIA…HCGSYGYTMA (336 aa). Catalysis depends on Cys-911, which acts as the Glycyl thioester intermediate.

It is found in the golgi apparatus. The protein localises to the golgi stack membrane. Its subcellular location is the cytoplasm. The protein resides in the endoplasmic reticulum. The enzyme catalyses S-ubiquitinyl-[E2 ubiquitin-conjugating enzyme]-L-cysteine + [acceptor protein]-L-lysine = [E2 ubiquitin-conjugating enzyme]-L-cysteine + N(6)-ubiquitinyl-[acceptor protein]-L-lysine.. It participates in protein modification; protein ubiquitination. Its function is as follows. E3 ubiquitin-protein ligase involved in Golgi membrane fusion and regulation of small GTPases. Acts as a regulator of Golgi membrane dynamics during the cell cycle: recruited to Golgi membrane by Rab proteins and regulates postmitotic Golgi membrane fusion. Acts by mediating ubiquitination during mitotic Golgi disassembly, ubiquitination serving as a signal for Golgi reassembly later, after cell division. The protein is E3 ubiquitin-protein ligase HACE1 (hace1) of Xenopus laevis (African clawed frog).